The sequence spans 365 residues: Alanine racemase (365 aa).

Lys32 functions as the Proton acceptor; specific for D-alanine in the catalytic mechanism. Position 32 is an N6-(pyridoxal phosphate)lysine (Lys32). Arg128 contacts substrate. Tyr257 serves as the catalytic Proton acceptor; specific for L-alanine. A substrate-binding site is contributed by Met305.

Belongs to the alanine racemase family. Requires pyridoxal 5'-phosphate as cofactor.

It carries out the reaction L-alanine = D-alanine. The protein operates within amino-acid biosynthesis; D-alanine biosynthesis; D-alanine from L-alanine: step 1/1. Catalyzes the interconversion of L-alanine and D-alanine. May also act on other amino acids. This chain is Alanine racemase (alr), found in Francisella tularensis subsp. holarctica (strain OSU18).